The chain runs to 102 residues: Large ribosomal subunit protein uL23c (102 aa).

Belongs to the universal ribosomal protein uL23 family. Part of the 50S ribosomal subunit.

The protein resides in the plastid. Its subcellular location is the chloroplast. Functionally, binds to 23S rRNA. This chain is Large ribosomal subunit protein uL23c (rpl23), found in Trieres chinensis (Marine centric diatom).